A 210-amino-acid chain; its full sequence is Pyridoxine/pyridoxamine 5'-phosphate oxidase (210 aa).

Substrate is bound by residues 7-10 and lysine 65; that span reads RDEY. Residues 60-65, 75-76, arginine 81, lysine 82, and glutamine 104 each bind FMN; these read RMVLLK and FT. Positions 122, 126, and 130 each coordinate substrate. FMN-binding positions include 139-140 and tryptophan 183; that span reads QS. 189-191 provides a ligand contact to substrate; sequence RLH. Arginine 193 is an FMN binding site.

Belongs to the pyridoxamine 5'-phosphate oxidase family. Homodimer. The cofactor is FMN.

It catalyses the reaction pyridoxamine 5'-phosphate + O2 + H2O = pyridoxal 5'-phosphate + H2O2 + NH4(+). The catalysed reaction is pyridoxine 5'-phosphate + O2 = pyridoxal 5'-phosphate + H2O2. Its pathway is cofactor metabolism; pyridoxal 5'-phosphate salvage; pyridoxal 5'-phosphate from pyridoxamine 5'-phosphate: step 1/1. The protein operates within cofactor metabolism; pyridoxal 5'-phosphate salvage; pyridoxal 5'-phosphate from pyridoxine 5'-phosphate: step 1/1. Its function is as follows. Catalyzes the oxidation of either pyridoxine 5'-phosphate (PNP) or pyridoxamine 5'-phosphate (PMP) into pyridoxal 5'-phosphate (PLP). The sequence is that of Pyridoxine/pyridoxamine 5'-phosphate oxidase from Haemophilus influenzae (strain ATCC 51907 / DSM 11121 / KW20 / Rd).